Here is a 171-residue protein sequence, read N- to C-terminus: Ponticulin-like protein F (171 aa).

The N-terminal stretch at 1–20 is a signal peptide; it reads MKFIPALIIFVFTIFALTNS. Glycine 149 is lipidated: GPI-like-anchor amidated glycine. Residues 150-171 constitute a propeptide, removed in mature form; that stretch reads TSSTIVIPFALILSLLLSVITL.

This sequence belongs to the ponticulin family. The GPI-like-anchor contains a phosphoceramide group, rather than a phosphatidyl group.

The protein localises to the cell membrane. The chain is Ponticulin-like protein F (ponF) from Dictyostelium discoideum (Social amoeba).